Reading from the N-terminus, the 69-residue chain is Neurotoxin Cex3 (69 aa).

Residue Ala-1 is a signal peptide. Residues 2-67 enclose the LCN-type CS-alpha/beta domain; it reads KDGYLVNKST…TYPLPNKSCG (66 aa). Intrachain disulfides connect Cys-13/Cys-66, Cys-17/Cys-42, Cys-26/Cys-47, and Cys-30/Cys-49. Position 66 is a cysteine amide (Cys-66). Residues 67–69 constitute a propeptide that is removed on maturation; it reads GRK.

This sequence belongs to the long (4 C-C) scorpion toxin superfamily. Sodium channel inhibitor family. Beta subfamily. As to expression, expressed by the venom gland.

It is found in the secreted. Functionally, beta toxins bind voltage-independently at site-4 of sodium channels (Nav) and shift the voltage of activation toward more negative potentials thereby affecting sodium channel activation and promoting spontaneous and repetitive firing. This chain is Neurotoxin Cex3, found in Centruroides exilicauda (Bark scorpion).